A 227-amino-acid polypeptide reads, in one-letter code: Ribonuclease 3 (227 aa).

In terms of domain architecture, RNase III spans 7–132 (LTAFMDRLGY…VIAAVYLDGG (126 aa)). Position 45 (Glu-45) interacts with Mg(2+). Asp-49 is an active-site residue. Asp-118 and Glu-121 together coordinate Mg(2+). Residue Glu-121 is part of the active site. The DRBM domain maps to 157-226 (DAKTALQEWA…AKDLLAQLAG (70 aa)).

It belongs to the ribonuclease III family. Homodimer. Mg(2+) serves as cofactor.

The protein resides in the cytoplasm. The catalysed reaction is Endonucleolytic cleavage to 5'-phosphomonoester.. In terms of biological role, digests double-stranded RNA. Involved in the processing of primary rRNA transcript to yield the immediate precursors to the large and small rRNAs (23S and 16S). Processes some mRNAs, and tRNAs when they are encoded in the rRNA operon. Processes pre-crRNA and tracrRNA of type II CRISPR loci if present in the organism. This Jannaschia sp. (strain CCS1) protein is Ribonuclease 3.